The primary structure comprises 360 residues: Geranylgeranyl pyrophosphate synthase 12, chloroplastic (360 aa).

Residues 1–39 constitute a chloroplast transit peptide; sequence MANTVHLSSSSLFIQTRGRKYNSILSFNNLQKRTVLSLS. Lys106, Arg109, and His138 together coordinate isopentenyl diphosphate. Residues Asp145 and Asp151 each contribute to the Mg(2+) site. Residue Arg156 participates in dimethylallyl diphosphate binding. Arg157 provides a ligand contact to isopentenyl diphosphate. Positions 245, 246, 283, 300, and 310 each coordinate dimethylallyl diphosphate.

Belongs to the FPP/GGPP synthase family. As to quaternary structure, monomer. It depends on Mg(2+) as a cofactor.

Its subcellular location is the plastid. The protein resides in the chloroplast. The catalysed reaction is isopentenyl diphosphate + dimethylallyl diphosphate = (2E)-geranyl diphosphate + diphosphate. It carries out the reaction isopentenyl diphosphate + (2E)-geranyl diphosphate = (2E,6E)-farnesyl diphosphate + diphosphate. It catalyses the reaction isopentenyl diphosphate + (2E,6E)-farnesyl diphosphate = (2E,6E,10E)-geranylgeranyl diphosphate + diphosphate. It functions in the pathway isoprenoid biosynthesis; farnesyl diphosphate biosynthesis; farnesyl diphosphate from geranyl diphosphate and isopentenyl diphosphate: step 1/1. Its pathway is isoprenoid biosynthesis; geranyl diphosphate biosynthesis; geranyl diphosphate from dimethylallyl diphosphate and isopentenyl diphosphate: step 1/1. The protein operates within isoprenoid biosynthesis; geranylgeranyl diphosphate biosynthesis; geranylgeranyl diphosphate from farnesyl diphosphate and isopentenyl diphosphate: step 1/1. Functionally, catalyzes the trans-addition of the three molecules of IPP onto DMAPP to form geranylgeranyl pyrophosphate. The polypeptide is Geranylgeranyl pyrophosphate synthase 12, chloroplastic (Arabidopsis thaliana (Mouse-ear cress)).